A 142-amino-acid chain; its full sequence is Required for drug-induced death protein 1 (142 aa).

Disordered regions lie at residues 1-32 and 46-66; these read MTVGARLRSKAESSLLRRGPRGRGRTEGDEEA and EAAAESGTSAADERGPGTRGA. The helical transmembrane segment at 116–138 threads the bilayer; it reads VVIGLQGFAAAYSAPFAVATSVV.

Its subcellular location is the membrane. Regulates drug efflux through modulation of ABCB1 localization and activity. The sequence is that of Required for drug-induced death protein 1 from Homo sapiens (Human).